The following is a 287-amino-acid chain: Phosphatidylserine decarboxylase proenzyme (287 aa).

Residues D90, H147, and S253 each act as charge relay system; for autoendoproteolytic cleavage activity in the active site. S253 (schiff-base intermediate with substrate; via pyruvic acid; for decarboxylase activity) is an active-site residue. Pyruvic acid (Ser); by autocatalysis is present on S253.

The protein belongs to the phosphatidylserine decarboxylase family. PSD-B subfamily. Prokaryotic type I sub-subfamily. Heterodimer of a large membrane-associated beta subunit and a small pyruvoyl-containing alpha subunit. The cofactor is pyruvate. In terms of processing, is synthesized initially as an inactive proenzyme. Formation of the active enzyme involves a self-maturation process in which the active site pyruvoyl group is generated from an internal serine residue via an autocatalytic post-translational modification. Two non-identical subunits are generated from the proenzyme in this reaction, and the pyruvate is formed at the N-terminus of the alpha chain, which is derived from the carboxyl end of the proenzyme. The autoendoproteolytic cleavage occurs by a canonical serine protease mechanism, in which the side chain hydroxyl group of the serine supplies its oxygen atom to form the C-terminus of the beta chain, while the remainder of the serine residue undergoes an oxidative deamination to produce ammonia and the pyruvoyl prosthetic group on the alpha chain. During this reaction, the Ser that is part of the protease active site of the proenzyme becomes the pyruvoyl prosthetic group, which constitutes an essential element of the active site of the mature decarboxylase.

It localises to the cell membrane. It carries out the reaction a 1,2-diacyl-sn-glycero-3-phospho-L-serine + H(+) = a 1,2-diacyl-sn-glycero-3-phosphoethanolamine + CO2. It participates in phospholipid metabolism; phosphatidylethanolamine biosynthesis; phosphatidylethanolamine from CDP-diacylglycerol: step 2/2. In terms of biological role, catalyzes the formation of phosphatidylethanolamine (PtdEtn) from phosphatidylserine (PtdSer). This is Phosphatidylserine decarboxylase proenzyme from Aliivibrio fischeri (strain ATCC 700601 / ES114) (Vibrio fischeri).